A 559-amino-acid chain; its full sequence is Berberine bridge enzyme-like A (559 aa).

Residues 1–21 form the signal peptide; sequence MFPLIILISFSLASLSETATG. Residues Asn-25 and Asn-37 are each glycosylated (N-linked (GlcNAc...) asparagine). A disulfide bridge connects residues Cys-29 and Cys-86. Residues 64–240 enclose the FAD-binding PCMH-type domain; sequence FMPKPTFIIL…YAWKIRLLKV (177 aa). A Pros-8alpha-FAD histidine modification is found at His-101. 3 N-linked (GlcNAc...) asparagine glycosylation sites follow: Asn-321, Asn-355, and Asn-494.

Belongs to the oxygen-dependent FAD-linked oxidoreductase family. It depends on FAD as a cofactor. Mostly expressed in roots.

The protein resides in the vacuole. It participates in alkaloid biosynthesis; nicotine biosynthesis. In terms of biological role, involved in the biosynthesis of pyridine alkaloid natural products, leading mainly to the production of anabasine, anatabine, nicotine and nornicotine, effective deterrents against herbivores with antiparasitic and pesticide properties (neurotoxins); nornicotine serves as the precursor in the synthesis of the carcinogen compound N'-nitrosonornicotine (NNN). Catalyzes a late oxidation step subsequent to the pyridine ring condensation reaction in the biosynthesis of alkaloids. The chain is Berberine bridge enzyme-like A from Nicotiana tabacum (Common tobacco).